Consider the following 878-residue polypeptide: MTESFPSTSASSHSSARYDPIELETRWQKEWLRQGLDRTPVAETNQKRFYALSMFPYPSGKLHMGHVRNYVITDVIARVQRMRGDAVLHPMGWDAFGLPAENAAIARNVDPGDWTDQNIAQMRAQLDRLGLSIDWDRQQATCHQDYYRWTQWLFLELFAGGLAYQKEATVNWDPIDKTVLANEQVDGEGRSWRSGALVEQRQLKQWFLRITDYADALIDDLDELTGWPERVRTMQANWIGRSHGAEIKFRVAGQTNSIITVFTTRPDTLHGASYVVLAPEHPLVEALTSPQQRIAVTAFCDLISQLSVKDRTAEDQPKRGVPIGAQVINPVNGESLPVWIADYVLADYGSGAVMGVPAHDERDFIFARSHELPIRIVVQMPDSDEHHNDGQAWTGAGVLVNSGAFDGLSTEEGKVAITTHGASKGWAQSKVQYRLRDWLISRQRYWGCPIPIIHCASCGIVPVPQEDLPVTLPRDIDLSGKGGSPLAQEQDWVEVKCPICGEKAHRETDTMDTFMCSSWYYLRFADPLNSQRPFDKDIVDEWLPVDQYVGGIEHAILHLLYARFFTKALHDRNLIGFKEPFNTLLTQGMVQGLTYRNTKNGSYISPELVSDEGDPRDPESGDKLEILFEKMSKSKYNGVDPAVVIDRYGADTARMFILFKAPPEKDLEWDDADVEGQFRFLQRLIRLIDSFVWPKTDEDNASISSANLTISSADLSEEEINMRRATHMAIEAITEDLSGDIQLNTAISELMKLSNSLGGKLDKVRTEVAAEALSVLVRLMAPFAPHLAEEFWMKLHGQGSIHQQSWPIIDPSALVLETIELVIQVKGKVRGTIQVPANADKTALEELALKSDIAVKWLEGQSPRRVIIVPGKLVNLVP.

The short motif at Pro56 to His66 is the 'HIGH' region element. A 'KMSKS' region motif is present at residues Lys630 to Ser634. Residue Lys633 participates in ATP binding.

Belongs to the class-I aminoacyl-tRNA synthetase family.

The protein resides in the cytoplasm. The enzyme catalyses tRNA(Leu) + L-leucine + ATP = L-leucyl-tRNA(Leu) + AMP + diphosphate. In Prochlorococcus marinus (strain MIT 9303), this protein is Leucine--tRNA ligase.